We begin with the raw amino-acid sequence, 142 residues long: Small heat shock protein IbpB (142 aa).

The 112-residue stretch at Ala26–Arg137 folds into the sHSP domain.

The protein belongs to the small heat shock protein (HSP20) family. Homodimer. Forms homomultimers of about 100-150 subunits at optimal growth temperatures. Conformation changes to oligomers at high temperatures or high ionic concentrations. The decrease in size of the multimers is accompanied by an increase in chaperone activity.

It localises to the cytoplasm. Its function is as follows. Associates with aggregated proteins, together with IbpA, to stabilize and protect them from irreversible denaturation and extensive proteolysis during heat shock and oxidative stress. Aggregated proteins bound to the IbpAB complex are more efficiently refolded and reactivated by the ATP-dependent chaperone systems ClpB and DnaK/DnaJ/GrpE. Its activity is ATP-independent. In Klebsiella pneumoniae (strain 342), this protein is Small heat shock protein IbpB.